A 244-amino-acid polypeptide reads, in one-letter code: Ribosomal RNA large subunit methyltransferase E (244 aa).

S-adenosyl-L-methionine-binding residues include Gly-81, Trp-83, Asp-109, Asp-125, and Asp-149. Lys-189 functions as the Proton acceptor in the catalytic mechanism.

This sequence belongs to the class I-like SAM-binding methyltransferase superfamily. RNA methyltransferase RlmE family.

Its subcellular location is the cytoplasm. It catalyses the reaction uridine(2552) in 23S rRNA + S-adenosyl-L-methionine = 2'-O-methyluridine(2552) in 23S rRNA + S-adenosyl-L-homocysteine + H(+). In terms of biological role, specifically methylates the uridine in position 2552 of 23S rRNA at the 2'-O position of the ribose in the fully assembled 50S ribosomal subunit. The sequence is that of Ribosomal RNA large subunit methyltransferase E from Cereibacter sphaeroides (strain ATCC 17023 / DSM 158 / JCM 6121 / CCUG 31486 / LMG 2827 / NBRC 12203 / NCIMB 8253 / ATH 2.4.1.) (Rhodobacter sphaeroides).